We begin with the raw amino-acid sequence, 273 residues long: Putative expansin-B2 (273 aa).

The signal sequence occupies residues 1–29 (MTILVVDRYYMLMNLLFALTCLLLNLTHC). Residue N36 is glycosylated (N-linked (GlcNAc...) asparagine). In terms of domain architecture, Expansin-like EG45 spans 65–173 (GGACGYGNAV…KKVECNYIGK (109 aa)). 3 disulfides stabilise this stretch: C68–C97, C100–C168, and C105–C111. An Expansin-like CBD domain is found at 186-269 (NSFAVLVAYV…NWQPGAIYKS (84 aa)).

Belongs to the expansin family. Expansin B subfamily.

It localises to the secreted. The protein localises to the cell wall. It is found in the membrane. Functionally, may cause loosening and extension of plant cell walls by disrupting non-covalent bonding between cellulose microfibrils and matrix glucans. No enzymatic activity has been found. The chain is Putative expansin-B2 (EXPB2) from Arabidopsis thaliana (Mouse-ear cress).